The following is a 632-amino-acid chain: Actin-related protein 8 (632 aa).

Basic and acidic residues predominate over residues 1–30; the sequence is MTQAEREQENGKEKEKEREKEKEKEKEQRG. The segment at 1–43 is disordered; it reads MTQAEREQENGKEKEKEREKEKEKEKEQRGIKRPIAPPVIPEP. 288-291 lines the ATP pocket; the sequence is DVGD. 2 disordered regions span residues 410–429 and 434–494; these read MTSL…DEHY and QSKQ…GGAE. The segment covering 434 to 443 has biased composition (low complexity); sequence QSKQDQSSKA.

The protein belongs to the actin family. ARP8 subfamily. As to quaternary structure, component of the chromatin remodeling INO80 complex; specifically part of a complex module associated with the DBINO domain of INO80. Exists as monomers and dimers, but the dimer is most probably the biologically relevant form required for stable interactions with histones that exploits the twofold symmetry of the nucleosome core.

The protein localises to the nucleus. Its subcellular location is the chromosome. Functionally, plays an important role in the functional organization of mitotic chromosomes. Exhibits low basal ATPase activity, and unable to polymerize. Proposed core component of the chromatin remodeling INO80 complex which is involved in transcriptional regulation, DNA replication and probably DNA repair. Required for the recruitment of INO80 (and probably the INO80 complex) to sites of DNA damage Strongly prefer nucleosomes and H3-H4 tetramers over H2A-H2B dimers, suggesting it may act as a nucleosome recognition module within the complex. The polypeptide is Actin-related protein 8 (actr8) (Salmo salar (Atlantic salmon)).